Reading from the N-terminus, the 598-residue chain is Probable pectinesterase/pectinesterase inhibitor 34 (598 aa).

The interval 1-40 is disordered; it reads MGYERLGPSGATGSVTTSTTTAPILNQVSTSEQPENNNRR. Residues 7 to 23 show a composition bias toward low complexity; the sequence is GPSGATGSVTTSTTTAP. Positions 24–36 are enriched in polar residues; that stretch reads ILNQVSTSEQPEN. Residues 46–66 form a helical membrane-spanning segment; the sequence is VVSSIVLAISLILAAAIFAGV. The segment at 81-232 is pectinesterase inhibitor 34; sequence RKPSQAISKA…SELVSNCLAI (152 aa). The pectinesterase 34 stretch occupies residues 284–582; the sequence is DIIVSKDGNG…FTVAEFIYGS (299 aa). Substrate is bound by residues threonine 360 and glutamine 390. Aspartate 413 serves as the catalytic Proton donor; for pectinesterase activity. Cysteine 427 and cysteine 447 form a disulfide bridge. The active-site Nucleophile; for pectinesterase activity is aspartate 434. The substrate site is built by arginine 502 and tryptophan 504.

It in the N-terminal section; belongs to the PMEI family. The protein in the C-terminal section; belongs to the pectinesterase family. As to expression, expressed in siliques.

It localises to the membrane. The catalysed reaction is [(1-&gt;4)-alpha-D-galacturonosyl methyl ester](n) + n H2O = [(1-&gt;4)-alpha-D-galacturonosyl](n) + n methanol + n H(+). The protein operates within glycan metabolism; pectin degradation; 2-dehydro-3-deoxy-D-gluconate from pectin: step 1/5. Its function is as follows. Acts in the modification of cell walls via demethylesterification of cell wall pectin. The chain is Probable pectinesterase/pectinesterase inhibitor 34 (PME34) from Arabidopsis thaliana (Mouse-ear cress).